Reading from the N-terminus, the 288-residue chain is Ribosomal RNA small subunit methyltransferase I (288 aa).

Belongs to the methyltransferase superfamily. RsmI family.

It localises to the cytoplasm. It carries out the reaction cytidine(1402) in 16S rRNA + S-adenosyl-L-methionine = 2'-O-methylcytidine(1402) in 16S rRNA + S-adenosyl-L-homocysteine + H(+). Catalyzes the 2'-O-methylation of the ribose of cytidine 1402 (C1402) in 16S rRNA. This is Ribosomal RNA small subunit methyltransferase I from Vibrio cholerae serotype O1 (strain ATCC 39315 / El Tor Inaba N16961).